The chain runs to 370 residues: Histidinol-phosphate aminotransferase 1 (370 aa).

The residue at position 222 (lysine 222) is an N6-(pyridoxal phosphate)lysine.

Belongs to the class-II pyridoxal-phosphate-dependent aminotransferase family. Histidinol-phosphate aminotransferase subfamily. As to quaternary structure, homodimer. Pyridoxal 5'-phosphate is required as a cofactor.

The catalysed reaction is L-histidinol phosphate + 2-oxoglutarate = 3-(imidazol-4-yl)-2-oxopropyl phosphate + L-glutamate. It participates in amino-acid biosynthesis; L-histidine biosynthesis; L-histidine from 5-phospho-alpha-D-ribose 1-diphosphate: step 7/9. The protein is Histidinol-phosphate aminotransferase 1 (hisC1) of Bacillus cereus (strain ATCC 14579 / DSM 31 / CCUG 7414 / JCM 2152 / NBRC 15305 / NCIMB 9373 / NCTC 2599 / NRRL B-3711).